We begin with the raw amino-acid sequence, 297 residues long: Light-independent protochlorophyllide reductase iron-sulfur ATP-binding protein (297 aa).

ATP contacts are provided by residues 41 to 46 (GIGKST) and lysine 70. Position 45 (serine 45) interacts with Mg(2+). Residues cysteine 126 and cysteine 160 each coordinate [4Fe-4S] cluster. ATP-binding positions include 211 to 212 (NR) and 235 to 237 (PDL).

The protein belongs to the NifH/BchL/ChlL family. In terms of assembly, homodimer. Protochlorophyllide reductase is composed of three subunits; BchL, BchN and BchB. [4Fe-4S] cluster serves as cofactor.

The enzyme catalyses chlorophyllide a + oxidized 2[4Fe-4S]-[ferredoxin] + 2 ADP + 2 phosphate = protochlorophyllide a + reduced 2[4Fe-4S]-[ferredoxin] + 2 ATP + 2 H2O. It participates in porphyrin-containing compound metabolism; bacteriochlorophyll biosynthesis (light-independent). In terms of biological role, component of the dark-operative protochlorophyllide reductase (DPOR) that uses Mg-ATP and reduced ferredoxin to reduce ring D of protochlorophyllide (Pchlide) to form chlorophyllide a (Chlide). This reaction is light-independent. The L component serves as a unique electron donor to the NB-component of the complex, and binds Mg-ATP. In Cereibacter sphaeroides (strain KD131 / KCTC 12085) (Rhodobacter sphaeroides), this protein is Light-independent protochlorophyllide reductase iron-sulfur ATP-binding protein.